The following is a 611-amino-acid chain: Poly(3-hydroxyalkanoate) polymerase subunit PhaC (611 aa).

Cysteine 349 is a catalytic residue.

It belongs to the PHA/PHB synthase family. Type I PhaC subfamily. Monomer.

It is found in the cytoplasm. The enzyme catalyses (3R)-3-hydroxybutanoyl-CoA + [(3R)-hydroxybutanoate](n) = [(3R)-hydroxybutanoate](n+1) + CoA. It participates in biopolymer metabolism; poly-(R)-3-hydroxybutanoate biosynthesis. Its function is as follows. Polymerizes D(-)-3-hydroxybutyryl-CoA to create PHB which consists of thousands of hydroxybutyrate molecules linked end to end. PHB serves as an intracellular energy reserve material when cells grow under conditions of nutrient limitation. This is Poly(3-hydroxyalkanoate) polymerase subunit PhaC from Rhizobium meliloti (strain 1021) (Ensifer meliloti).